Consider the following 330-residue polypeptide: MDPSTLLLFVIIAAGLIVLSIFFTFVPVMLWISALAAGVRVSIFTLVGMRLRRVIPNRVVNPLIKAHKAGLDVTINQLESHYLAGGNVDRVVNALIAAQRANIELNFARCAAIDLAGRDVLEAVQMSVNPKVIETPFISGVAMDGIEVKAKARITVRANIERLVGGAGEETIIARVGEGIVSTIGSSNNHKRVLENPDMISQTVLGKGLDSGTAFEILSIDIADVDIGKNIGAILQTDQAEADKNIAQAKAEERRAMAVAQEQEMRAKVEEMRAKVVEAEAEVPLAMAEALREGNIGVMDYMNIKNIDADTDMRDSFGKMTKGPSDNENK.

Transmembrane regions (helical) follow at residues 6–26 (LLLF…FTFV) and 28–48 (VMLW…TLVG).

Belongs to the flotillin-like FloA family. Homooligomerizes.

The protein localises to the cell membrane. It is found in the membrane raft. Its function is as follows. Found in functional membrane microdomains (FMM) that may be equivalent to eukaryotic membrane rafts. FMMs are highly dynamic and increase in number as cells age. Flotillins are thought to be important factors in membrane fluidity. This Bacillus pumilus (strain SAFR-032) protein is Flotillin-like protein FloA.